Here is a 97-residue protein sequence, read N- to C-terminus: Putative defensin-like protein 237 (97 aa).

Residues 1–23 (MRHATSPIVFCFLIFLVMNHVKG) form the signal peptide. Cystine bridges form between Cys-30/Cys-94, Cys-40/Cys-71, Cys-48/Cys-84, and Cys-69/Cys-86.

It belongs to the DEFL family.

It localises to the secreted. The sequence is that of Putative defensin-like protein 237 (SCRL21) from Arabidopsis thaliana (Mouse-ear cress).